The sequence spans 98 residues: NADH-ubiquinone oxidoreductase chain 4L (98 aa).

3 consecutive transmembrane segments (helical) span residues 1-21 (MSMM…GLLM), 29-49 (SLLC…VTIL), and 61-81 (IILL…LVMV).

The protein belongs to the complex I subunit 4L family. In terms of assembly, core subunit of respiratory chain NADH dehydrogenase (Complex I) which is composed of 45 different subunits.

The protein resides in the mitochondrion inner membrane. The enzyme catalyses a ubiquinone + NADH + 5 H(+)(in) = a ubiquinol + NAD(+) + 4 H(+)(out). In terms of biological role, core subunit of the mitochondrial membrane respiratory chain NADH dehydrogenase (Complex I) which catalyzes electron transfer from NADH through the respiratory chain, using ubiquinone as an electron acceptor. Part of the enzyme membrane arm which is embedded in the lipid bilayer and involved in proton translocation. This Zalophus californianus (California sealion) protein is NADH-ubiquinone oxidoreductase chain 4L (MT-ND4L).